We begin with the raw amino-acid sequence, 504 residues long: MDTIKAEEISQIISKQIRDYEKKLDVSETGTVLSVGDGIARIYGVENAMAMELLEFPGGIMGMVLNLEADNVGVAVLGDVTHIKEGDIVKRTGKIAQIPVGEALLGRVIDATGEPIDGKGPLGATEFSRIEMIAPGVIKRQPVNEPMYTGLKAIDAMTPIGRGQRELIIGDRQIGKTAIGIDAIIRQKDTGVKCIYVAIGQKKSTVSQIVENLRKHDAMSYTCVVAGCASDPATLQYIAAYAGCSIGEYFRDRGQDALIIYDDLSKQAVAYRQISLLLRRPPGREAYPGDIFYNHSRLLERSARVSADLGGGSLTALPIIETQAGDVSAYIPTNVISITDGQVYLEPSLFFSGIRPAINVGLSVSRVGGAAQVKAMKQVAGTLKLDLAQYRELASFAQFGSDLDKATQAQLDRGVRLVEILKQPQFQPMSLAEEVIVLFAGTRGFLDKYEVEKIKEYEPQVLAYMKSKHQDIMQEIDDKKVISPELEQKIKEALTAFDSVFVAG.

170–177 (GDRQIGKT) is a binding site for ATP.

It belongs to the ATPase alpha/beta chains family. F-type ATPases have 2 components, CF(1) - the catalytic core - and CF(0) - the membrane proton channel. CF(1) has five subunits: alpha(3), beta(3), gamma(1), delta(1), epsilon(1). CF(0) has three main subunits: a(1), b(2) and c(9-12). The alpha and beta chains form an alternating ring which encloses part of the gamma chain. CF(1) is attached to CF(0) by a central stalk formed by the gamma and epsilon chains, while a peripheral stalk is formed by the delta and b chains.

The protein resides in the cell inner membrane. The enzyme catalyses ATP + H2O + 4 H(+)(in) = ADP + phosphate + 5 H(+)(out). In terms of biological role, produces ATP from ADP in the presence of a proton gradient across the membrane. The alpha chain is a regulatory subunit. The polypeptide is ATP synthase subunit alpha 1 (Syntrophus aciditrophicus (strain SB)).